The chain runs to 334 residues: D-alanine--D-alanine ligase (334 aa).

The region spanning 121 to 327 is the ATP-grasp domain; that stretch reads KLWYDALDIP…FSEFLVQCVT (207 aa). 151–206 contributes to the ATP binding site; sequence AFGHWGSIFVKAARQGSSVGCYKVTTEDQIAPAIEAAFGFSEQVLVEQAVKPRELE. Mg(2+) is bound by residues D281, E294, and N296.

Belongs to the D-alanine--D-alanine ligase family. Requires Mg(2+) as cofactor. The cofactor is Mn(2+).

The protein resides in the cytoplasm. It catalyses the reaction 2 D-alanine + ATP = D-alanyl-D-alanine + ADP + phosphate + H(+). The protein operates within cell wall biogenesis; peptidoglycan biosynthesis. Cell wall formation. The chain is D-alanine--D-alanine ligase from Vibrio cholerae serotype O1 (strain ATCC 39315 / El Tor Inaba N16961).